Here is a 143-residue protein sequence, read N- to C-terminus: uncharacterized protein (143 aa).

Belongs to the SufE family.

This is an uncharacterized protein from Mycobacterium tuberculosis (strain CDC 1551 / Oshkosh).